Reading from the N-terminus, the 305-residue chain is Sulfate adenylyltransferase subunit 2 (305 aa).

It belongs to the PAPS reductase family. CysD subfamily. In terms of assembly, heterodimer composed of CysD, the smaller subunit, and CysN.

The enzyme catalyses sulfate + ATP + H(+) = adenosine 5'-phosphosulfate + diphosphate. The protein operates within sulfur metabolism; hydrogen sulfide biosynthesis; sulfite from sulfate: step 1/3. In terms of biological role, with CysN forms the ATP sulfurylase (ATPS) that catalyzes the adenylation of sulfate producing adenosine 5'-phosphosulfate (APS) and diphosphate, the first enzymatic step in sulfur assimilation pathway. APS synthesis involves the formation of a high-energy phosphoric-sulfuric acid anhydride bond driven by GTP hydrolysis by CysN coupled to ATP hydrolysis by CysD. This is Sulfate adenylyltransferase subunit 2 from Myxococcus xanthus (strain DK1622).